The primary structure comprises 145 residues: Immune protein Tsi4 (145 aa).

Helical transmembrane passes span 9–29 (IGGL…LLAG) and 109–129 (ALWG…IVGF).

It localises to the membrane. Immunity protein that plays a role in preventing early activation of toxin Tse4. The protein is Immune protein Tsi4 of Pseudomonas aeruginosa (strain ATCC 15692 / DSM 22644 / CIP 104116 / JCM 14847 / LMG 12228 / 1C / PRS 101 / PAO1).